The sequence spans 362 residues: Chorismate synthase (362 aa).

Arg-47 contacts NADP(+). Residues 124-126, Gly-286, 301-305, and Arg-327 contribute to the FMN site; these read RSS and KPTAT.

Belongs to the chorismate synthase family. In terms of assembly, homotetramer. Requires FMNH2 as cofactor.

The enzyme catalyses 5-O-(1-carboxyvinyl)-3-phosphoshikimate = chorismate + phosphate. It functions in the pathway metabolic intermediate biosynthesis; chorismate biosynthesis; chorismate from D-erythrose 4-phosphate and phosphoenolpyruvate: step 7/7. Catalyzes the anti-1,4-elimination of the C-3 phosphate and the C-6 proR hydrogen from 5-enolpyruvylshikimate-3-phosphate (EPSP) to yield chorismate, which is the branch point compound that serves as the starting substrate for the three terminal pathways of aromatic amino acid biosynthesis. This reaction introduces a second double bond into the aromatic ring system. The sequence is that of Chorismate synthase from Trichormus variabilis (strain ATCC 29413 / PCC 7937) (Anabaena variabilis).